The primary structure comprises 196 residues: HTH-type transcriptional regulator UidR (196 aa).

Residues 10 to 70 form the HTH tetR-type domain; the sequence is QPTRTRILNA…AIILQDQERA (61 aa). Residues 33–52 constitute a DNA-binding region (H-T-H motif); that stretch reads SMKAICKSCAISPGTLYHHF.

Functionally, repressor for the uidRABC (gusRABC) operon. This is HTH-type transcriptional regulator UidR (uidR) from Escherichia coli O157:H7.